We begin with the raw amino-acid sequence, 163 residues long: Putative protein CASTOR3P (163 aa).

It belongs to the GATS family.

This chain is Putative protein CASTOR3P, found in Homo sapiens (Human).